Here is a 357-residue protein sequence, read N- to C-terminus: Isopentenyl-diphosphate delta-isomerase (357 aa).

Residue 12–13 (RK) participates in substrate binding. FMN contacts are provided by residues S70, 71–73 (SMT), S101, and N130. 101–103 (SMR) contributes to the substrate binding site. Q165 contacts substrate. E166 lines the Mg(2+) pocket. FMN-binding positions include K197, 289–291 (GIR), and 310–311 (AQ).

It belongs to the IPP isomerase type 2 family. As to quaternary structure, homooctamer. Dimer of tetramers. FMN is required as a cofactor. It depends on NADPH as a cofactor. Requires Mg(2+) as cofactor.

The protein resides in the cytoplasm. The catalysed reaction is isopentenyl diphosphate = dimethylallyl diphosphate. Functionally, involved in the biosynthesis of isoprenoids. Catalyzes the 1,3-allylic rearrangement of the homoallylic substrate isopentenyl (IPP) to its allylic isomer, dimethylallyl diphosphate (DMAPP). This Chlorobaculum parvum (strain DSM 263 / NCIMB 8327) (Chlorobium vibrioforme subsp. thiosulfatophilum) protein is Isopentenyl-diphosphate delta-isomerase.